The sequence spans 453 residues: Flavonol-3-O-rhamnosyltransferase (453 aa).

The active-site Proton acceptor is histidine 24. Residue histidine 24 coordinates an anthocyanidin. The Charge relay role is filled by aspartate 119. Histidine 150 lines the an anthocyanidin pocket. Residues threonine 280, alanine 333, histidine 350, asparagine 354, serine 355, and glutamate 358 each contribute to the UDP-beta-L-rhamnose site. Residue alanine 373 participates in an anthocyanidin binding.

This sequence belongs to the UDP-glycosyltransferase family. As to expression, expressed in leaves, flowers, siliques, and stems. Expressed in the shoot apex.

It catalyses the reaction kaempferol + UDP-beta-L-rhamnose = kaempferol 3-O-alpha-L-rhamnoside + UDP + H(+). The catalysed reaction is UDP-beta-L-rhamnose + quercetin = quercitrin + UDP + H(+). It functions in the pathway flavonoid metabolism. In terms of biological role, flavonol 3-O-rhamnosyltransferase that catalyzes the transfer of rhamnose from UDP-rhamnose to the 3-OH position of kaempferol and quercetin. Possesses low quercetin 3-O-glucosyltransferase activity in vitro. The protein is Flavonol-3-O-rhamnosyltransferase of Arabidopsis thaliana (Mouse-ear cress).